Here is a 119-residue protein sequence, read N- to C-terminus: Ribosome-binding factor A (119 aa).

Belongs to the RbfA family. As to quaternary structure, monomer. Binds 30S ribosomal subunits, but not 50S ribosomal subunits or 70S ribosomes.

The protein resides in the cytoplasm. Its function is as follows. One of several proteins that assist in the late maturation steps of the functional core of the 30S ribosomal subunit. Associates with free 30S ribosomal subunits (but not with 30S subunits that are part of 70S ribosomes or polysomes). Required for efficient processing of 16S rRNA. May interact with the 5'-terminal helix region of 16S rRNA. This chain is Ribosome-binding factor A, found in Geobacter sp. (strain M21).